The following is a 384-amino-acid chain: 1-deoxy-D-xylulose 5-phosphate reductoisomerase (384 aa).

The NADPH site is built by Thr10, Gly11, Ser12, Ile13, Asn38, and Asn120. Lys121 is a binding site for 1-deoxy-D-xylulose 5-phosphate. Glu122 lines the NADPH pocket. Asp146 is a binding site for Mn(2+). Residues Ser147, Glu148, Ser172, and His195 each contribute to the 1-deoxy-D-xylulose 5-phosphate site. Residue Glu148 participates in Mn(2+) binding. Residue Gly201 coordinates NADPH. Positions 208, 213, 214, and 217 each coordinate 1-deoxy-D-xylulose 5-phosphate. Residue Glu217 participates in Mn(2+) binding.

The protein belongs to the DXR family. Mg(2+) serves as cofactor. Requires Mn(2+) as cofactor.

It carries out the reaction 2-C-methyl-D-erythritol 4-phosphate + NADP(+) = 1-deoxy-D-xylulose 5-phosphate + NADPH + H(+). The protein operates within isoprenoid biosynthesis; isopentenyl diphosphate biosynthesis via DXP pathway; isopentenyl diphosphate from 1-deoxy-D-xylulose 5-phosphate: step 1/6. Catalyzes the NADPH-dependent rearrangement and reduction of 1-deoxy-D-xylulose-5-phosphate (DXP) to 2-C-methyl-D-erythritol 4-phosphate (MEP). This Protochlamydia amoebophila (strain UWE25) protein is 1-deoxy-D-xylulose 5-phosphate reductoisomerase.